We begin with the raw amino-acid sequence, 243 residues long: DNA repair protein RecO (243 aa).

Belongs to the RecO family.

Functionally, involved in DNA repair and RecF pathway recombination. The sequence is that of DNA repair protein RecO from Bartonella quintana (strain Toulouse) (Rochalimaea quintana).